We begin with the raw amino-acid sequence, 207 residues long: Ribonuclease HII (207 aa).

Residues 1-207 (MDVLGIDEAG…ATVEKMKNSQ (207 aa)) enclose the RNase H type-2 domain. A divalent metal cation contacts are provided by aspartate 7, glutamate 8, and aspartate 105.

It belongs to the RNase HII family. Mn(2+) serves as cofactor. Mg(2+) is required as a cofactor.

It localises to the cytoplasm. The enzyme catalyses Endonucleolytic cleavage to 5'-phosphomonoester.. Functionally, endonuclease that specifically degrades the RNA of RNA-DNA hybrids. The polypeptide is Ribonuclease HII (Methanobrevibacter smithii (strain ATCC 35061 / DSM 861 / OCM 144 / PS)).